The chain runs to 370 residues: Cytochrome b (370 aa).

Helical transmembrane passes span 25-45, 69-90, 105-125, and 170-190; these read FGSM…FLAV, WLMQ…YIHI, WLSG…GYVL, and FFAL…LHVM. Heme b-binding residues include histidine 75 and histidine 89. 2 residues coordinate heme b: histidine 174 and histidine 188. Histidine 193 serves as a coordination point for a ubiquinone. 4 consecutive transmembrane segments (helical) span residues 218 to 238, 280 to 300, 312 to 332, and 339 to 358; these read YKDL…VSFS, LGGA…PFTH, FMQM…WTAT, and FTLI…ISNP.

It belongs to the cytochrome b family. The cytochrome bc1 complex contains 3 respiratory subunits (MT-CYB, CYC1 and UQCRFS1), 2 core proteins (UQCRC1 and UQCRC2) and probably 6 low-molecular weight proteins. Heme b is required as a cofactor.

It localises to the mitochondrion inner membrane. Functionally, component of the ubiquinol-cytochrome c reductase complex (complex III or cytochrome b-c1 complex) that is part of the mitochondrial respiratory chain. The b-c1 complex mediates electron transfer from ubiquinol to cytochrome c. Contributes to the generation of a proton gradient across the mitochondrial membrane that is then used for ATP synthesis. This is Cytochrome b (MT-CYB) from Eunectes notaeus (Yellow anaconda).